The following is a 399-amino-acid chain: Endo-1,4-beta-xylanase C (399 aa).

An N-terminal signal peptide occupies residues 1–20 (MFKFSASLAALAALVPFVAA). Residues 21–56 (QSPEWGQCGGIGWTGPTTCVAGTTCVESNPYYSQCL) enclose the CBM1 domain. One can recognise a GH10 domain in the interval 81–396 (SAKLHTLAKA…KPAFNGIAAG (316 aa)). Residue glutamate 212 is the Proton donor of the active site. Residue glutamate 318 is the Nucleophile of the active site. Cysteine 346 and cysteine 352 form a disulfide bridge.

Belongs to the glycosyl hydrolase 10 (cellulase F) family.

The protein resides in the secreted. The enzyme catalyses Endohydrolysis of (1-&gt;4)-beta-D-xylosidic linkages in xylans.. The protein operates within glycan degradation; xylan degradation. Its function is as follows. Endo-1,4-beta-xylanase involved in the hydrolysis of xylan, a major structural heterogeneous polysaccharide found in plant biomass representing the second most abundant polysaccharide in the biosphere, after cellulose. The protein is Endo-1,4-beta-xylanase C (xynC) of Phanerodontia chrysosporium (White-rot fungus).